The following is a 487-amino-acid chain: 3-octaprenyl-4-hydroxybenzoate carboxy-lyase (487 aa).

A Mn(2+)-binding site is contributed by asparagine 172. Residues 175–177 (IYR), 189–191 (RWL), and 194–195 (RG) each bind prenylated FMN. Residue glutamate 238 coordinates Mn(2+). The Proton donor role is filled by aspartate 287.

The protein belongs to the UbiD family. Homohexamer. Requires prenylated FMN as cofactor. Mn(2+) serves as cofactor.

The protein resides in the cell membrane. It catalyses the reaction a 4-hydroxy-3-(all-trans-polyprenyl)benzoate + H(+) = a 2-(all-trans-polyprenyl)phenol + CO2. The protein operates within cofactor biosynthesis; ubiquinone biosynthesis. Its function is as follows. Catalyzes the decarboxylation of 3-octaprenyl-4-hydroxy benzoate to 2-octaprenylphenol, an intermediate step in ubiquinone biosynthesis. The sequence is that of 3-octaprenyl-4-hydroxybenzoate carboxy-lyase from Blochmanniella pennsylvanica (strain BPEN).